Reading from the N-terminus, the 141-residue chain is HTH-type transcriptional regulator MntR (141 aa).

Residues M1–T63 form the HTH dtxR-type domain. Mn(2+)-binding residues include D8, E11, H77, E99, E102, and H103.

This sequence belongs to the DtxR/MntR family. As to quaternary structure, homodimer.

It localises to the cytoplasm. With respect to regulation, DNA binding is strongly activated by Mn(2+). Functionally, central regulator of manganese homeostasis. The protein is HTH-type transcriptional regulator MntR of Geobacillus thermodenitrificans (strain NG80-2).